A 122-amino-acid polypeptide reads, in one-letter code: Small ribosomal subunit protein uS13 (122 aa).

Residues R99–K122 are disordered.

The protein belongs to the universal ribosomal protein uS13 family. As to quaternary structure, part of the 30S ribosomal subunit. Forms a loose heterodimer with protein S19. Forms two bridges to the 50S subunit in the 70S ribosome.

In terms of biological role, located at the top of the head of the 30S subunit, it contacts several helices of the 16S rRNA. In the 70S ribosome it contacts the 23S rRNA (bridge B1a) and protein L5 of the 50S subunit (bridge B1b), connecting the 2 subunits; these bridges are implicated in subunit movement. Contacts the tRNAs in the A and P-sites. The protein is Small ribosomal subunit protein uS13 of Rhodopseudomonas palustris (strain TIE-1).